A 641-amino-acid chain; its full sequence is MNIRSNPETTRAAVTTGALPSSKKIYATPASAPDLRVPLREIILSEGAGEPNLPVYDTSGPYTDPTVVIDVNKGLPRPRTEWVKQRGGVEQYEGRDIKPEDNGNVGAAHAAKAFTAHHQPLRGISDAPITQYEFARRGIITKEMIYVAERENLGRKQQLERAEAALADGESFGAAVPAFITPEFVRDEIARGRAIIPANINHGELEPMIIGRNFLTKINANIGNSAVTSSVEEEVDKMVWAIRWGADTVMDLSTGRNIHTTREWILRNSPVPIGTVPIYQALEKCEGDPVKLTWELYKDTLIEQAEQGVDYFTIHAGVRLQYIHLTASRVTGIVSRGGSIMAKWCLAHHKESFLYTHFDEICDLMRKYDVSFSLGDGLRPGSIADANDRAQFAELETLGELTKIAWAKGCQVMIEGPGHVPMHKIKINMDKQLKECGEAPFYTLGPLTTDIAPGYDHITSGIGAAMIGWFGCAMLCYVTPKEHLGLPDRNDVKTGVITYKIAAHAADLAKGHPAAQLRDDALSRARFEFRWQDQFNLGLDPDTAQAFHDETLPKDAHKVAHFCSMCGPKFCSMKITQDVRDYAAGLGDNEKAALYPVGHAGMTISGTIEDGMAQMSAKFKEMGSSVYLDADKVKESNKALS.

Substrate contacts are provided by residues Asn221, Met250, Tyr279, His315, 335–337 (SRG), 376–379 (DGLR), and Glu415. His419 provides a ligand contact to Zn(2+). Residue Tyr442 coordinates substrate. His483 is a Zn(2+) binding site. 3 residues coordinate [4Fe-4S] cluster: Cys563, Cys566, and Cys571.

It belongs to the ThiC family. As to quaternary structure, homodimer. [4Fe-4S] cluster serves as cofactor.

It carries out the reaction 5-amino-1-(5-phospho-beta-D-ribosyl)imidazole + S-adenosyl-L-methionine = 4-amino-2-methyl-5-(phosphooxymethyl)pyrimidine + CO + 5'-deoxyadenosine + formate + L-methionine + 3 H(+). Its pathway is cofactor biosynthesis; thiamine diphosphate biosynthesis. Catalyzes the synthesis of the hydroxymethylpyrimidine phosphate (HMP-P) moiety of thiamine from aminoimidazole ribotide (AIR) in a radical S-adenosyl-L-methionine (SAM)-dependent reaction. This chain is Phosphomethylpyrimidine synthase, found in Rhodopseudomonas palustris (strain TIE-1).